Here is a 350-residue protein sequence, read N- to C-terminus: Inner membrane protein YhiM (350 aa).

Over 1 to 2 the chain is Cytoplasmic; the sequence is MN. The helical transmembrane segment at 3–23 threads the bilayer; the sequence is IYIGWLFKLIPLIMGLICIAL. Residues 24-41 lie on the Periplasmic side of the membrane; it reads GGFVLESSGQSEYFVAGH. The helical transmembrane segment at 42–62 threads the bilayer; it reads VLISLAAICLALFTTAFIIIS. Topologically, residues 63–74 are cytoplasmic; the sequence is QLTRGVNTFYNT. Residues 75–95 form a helical membrane-spanning segment; it reads LFPIIGYAGSIITMIWGWALL. The Periplasmic portion of the chain corresponds to 96-104; it reads AGNDVMADE. A helical transmembrane segment spans residues 105 to 125; that stretch reads FVAGHVIFGVGMIAACVSTVA. Residues 126-157 lie on the Cytoplasmic side of the membrane; that stretch reads ASSGHFLLIPKNAAGSKSDGTPVQAYSSLIGN. Residues 158–178 traverse the membrane as a helical segment; the sequence is CLIAVPVLLTLLGFIWSITLL. Residues 179–190 are Periplasmic-facing; sequence RSADITPHYVAG. A helical membrane pass occupies residues 191-211; sequence HVLLGLTAICACLIGLVATIV. At 212 to 225 the chain is on the cytoplasmic side; the sequence is HQTRNTFSTKEHWL. The chain crosses the membrane as a helical span at residues 226 to 246; the sequence is WCYWVIFLGSITVLQGIYVLV. Over 247–257 the chain is Periplasmic; sequence SSDASARLAPG. A helical transmembrane segment spans residues 258 to 278; it reads IILICLGMICYSIFSKVWLLA. Topologically, residues 279 to 290 are cytoplasmic; sequence LVWRRTCSLANR. The chain crosses the membrane as a helical span at residues 291–311; sequence IPMIPVFTCLFCLFLASFLAE. The Periplasmic portion of the chain corresponds to 312-324; sequence MAQTDMGYFIPSR. The chain crosses the membrane as a helical span at residues 325 to 345; that stretch reads VLVGLGAVCFTLFSIVSILEA. The Cytoplasmic segment spans residues 346–350; it reads GSAKK.

The protein resides in the cell inner membrane. This chain is Inner membrane protein YhiM (yhiM), found in Escherichia coli (strain K12).